A 152-amino-acid polypeptide reads, in one-letter code: Large-conductance mechanosensitive channel (152 aa).

The next 3 helical transmembrane spans lie at 14 to 34, 39 to 59, and 85 to 105; these read VVDM…VKSL, LMPG…FLVI, and GLFI…FLVI.

The protein belongs to the MscL family. As to quaternary structure, homopentamer.

It is found in the cell inner membrane. In terms of biological role, channel that opens in response to stretch forces in the membrane lipid bilayer. May participate in the regulation of osmotic pressure changes within the cell. This is Large-conductance mechanosensitive channel from Syntrophus aciditrophicus (strain SB).